The following is a 979-amino-acid chain: Glutamate receptor ionotropic, kainate 5 (979 aa).

Residues 1–14 (MPAELLLLLIVAFA) form the signal peptide. Residues 15–544 (NPSCQVLSSL…YFSFLDPFSP (530 aa)) are Extracellular-facing. 3 disulfides stabilise this stretch: cysteine 36-cysteine 292, cysteine 83-cysteine 334, and cysteine 165-cysteine 170. Residues asparagine 219, asparagine 271, asparagine 285, asparagine 322, asparagine 372, asparagine 394, asparagine 400, asparagine 407, asparagine 414, and asparagine 478 are each glycosylated (N-linked (GlcNAc...) asparagine). The chain crosses the membrane as a helical span at residues 545–565 (AVWLFMLLAYLAVSCVLFLAA). Residues 566–622 (RLSPYEWYNPHPCLRARPHILENQYTLGNSLWFPVGGFMQQGSEIMPRALSTRCVSG) are Cytoplasmic-facing. The helical transmembrane segment at 623-643 (VWWAFTLIIISSYTANLAAFL) threads the bilayer. Residues 644–803 (TVQRMEVPVE…HRAKGLGMEN (160 aa)) lie on the Extracellular side of the membrane. N-linked (GlcNAc...) asparagine glycosylation occurs at asparagine 735. The chain crosses the membrane as a helical span at residues 804 to 824 (IGGIFVVLICGLIIAVFVAVM). At 825 to 979 (EFIWSTRRSA…TGPRELTEHE (155 aa)) the chain is on the cytoplasmic side. The span at 856–867 (RKTSRSRRRRRP) shows a compositional bias: basic residues. 3 disordered regions span residues 856–875 (RKTSRSRRRRRPGGPSRALL), 890–925 (LYSAGAGGDAGAHGGPQRLLDDPGPPGGPRPQAPTP), and 942–979 (RASGAGAPPRGLGTPAEATSPPRPRPGPTGPRELTEHE). Gly residues predominate over residues 894–903 (GAGGDAGAHG). A compositionally biased stretch (pro residues) spans 912 to 923 (PGPPGGPRPQAP).

The protein belongs to the glutamate-gated ion channel (TC 1.A.10.1) family. GRIK5 subfamily. In terms of assembly, homotetramer. Heterotetramer with GRIK2. Can form functional heteromeric receptors with GRIK1, GRIK2 and GRIK3. Forms a heteromeric complex with GRIK2. Expressed in the hippocampal mossy fiber synapses (at protein level).

It localises to the cell membrane. The protein resides in the postsynaptic cell membrane. The protein localises to the presynaptic cell membrane. Ionotropic glutamate receptor that functions as a cation-permeable ligand-gated ion channel, gated by L-glutamate and the glutamatergic agonist kainic acid. Cannot form functional channels on its own and produces channel activity only in heteromeric assembly with GRIK2 subunit. Can form functional heteromeric receptors with GRIK1 and GRIK3. The protein is Glutamate receptor ionotropic, kainate 5 (Grik5) of Mus musculus (Mouse).